Consider the following 30-residue polypeptide: Thylakoid lumenal 13.3 kDa protein (30 aa).

It is found in the plastid. The protein localises to the chloroplast thylakoid lumen. The protein is Thylakoid lumenal 13.3 kDa protein of Spinacia oleracea (Spinach).